We begin with the raw amino-acid sequence, 435 residues long: AP-2 complex subunit mu (435 aa).

Ser-45 is modified (phosphoserine). Thr-156 is subject to Phosphothreonine. In terms of domain architecture, MHD spans 170 to 434; that stretch reads RNELFLDVLE…IGRSGIYETR (265 aa). A 1,2-diacyl-sn-glycero-3-phospho-(1D-myo-inositol-3,4,5-trisphosphate) is bound by residues Lys-341, Lys-345, and Lys-354.

This sequence belongs to the adaptor complexes medium subunit family. As to quaternary structure, adaptor protein complex 2 (AP-2) is a heterotetramer composed of two large adaptins (alpha-type subunit AP2A1 or AP2A2 and beta-type subunit AP2B1), a medium adaptin (mu-type subunit AP2M1) and a small adaptin (sigma-type subunit AP2S1). Interacts with ATP6V1H and MEGF10. Interacts with EGFR and TTGN1. Interacts with F2R. Interacts with PIP5K1C; tyrosine phosphorylation of PIP5K1C weakens the interaction. Interacts with KIAA0319; required for clathrin-mediated endocytosis of KIAA0319. Interacts with DVL2 (via DEP domain). Interacts with KCNQ1; mediates estrogen-induced internalization via clathrin-coated vesicles. Interacts with P2RX4 (via internalization motif). Together with AP2A1 or AP2A2 and AP2B1, it interacts with ADAM10; this interaction facilitates ADAM10 endocytosis from the plasma membrane during long-term potentiation in hippocampal neurons. Probably interacts with ACE2 (via endocytic sorting signal motif); the interaction is inhibited by ACE2 phosphorylation. Interacts with RALBP1; the interaction is direct. Interacts with TMEM106B (via N-terminus). In terms of processing, phosphorylation at Thr-156 increases the affinity of the AP-2 complex for cargo membrane proteins during the initial stages of endocytosis.

It localises to the cell membrane. It is found in the membrane. The protein localises to the coated pit. Its function is as follows. Component of the adaptor protein complex 2 (AP-2). Adaptor protein complexes function in protein transport via transport vesicles in different membrane traffic pathways. Adaptor protein complexes are vesicle coat components and appear to be involved in cargo selection and vesicle formation. AP-2 is involved in clathrin-dependent endocytosis in which cargo proteins are incorporated into vesicles surrounded by clathrin (clathrin-coated vesicles, CCVs) which are destined for fusion with the early endosome. The clathrin lattice serves as a mechanical scaffold but is itself unable to bind directly to membrane components. Clathrin-associated adaptor protein (AP) complexes which can bind directly to both the clathrin lattice and to the lipid and protein components of membranes are considered to be the major clathrin adaptors contributing the CCV formation. AP-2 also serves as a cargo receptor to selectively sort the membrane proteins involved in receptor-mediated endocytosis. AP-2 seems to play a role in the recycling of synaptic vesicle membranes from the presynaptic surface. AP-2 recognizes Y-X-X-[FILMV] (Y-X-X-Phi) and [ED]-X-X-X-L-[LI] endocytosis signal motifs within the cytosolic tails of transmembrane cargo molecules. AP-2 may also play a role in maintaining normal post-endocytic trafficking through the ARF6-regulated, non-clathrin pathway. During long-term potentiation in hippocampal neurons, AP-2 is responsible for the endocytosis of ADAM10. The AP-2 mu subunit binds to transmembrane cargo proteins; it recognizes the Y-X-X-Phi motifs. The surface region interacting with to the Y-X-X-Phi motif is inaccessible in cytosolic AP-2, but becomes accessible through a conformational change following phosphorylation of AP-2 mu subunit at Thr-156 in membrane-associated AP-2. The membrane-specific phosphorylation event appears to involve assembled clathrin which activates the AP-2 mu kinase AAK1. Plays a role in endocytosis of frizzled family members upon Wnt signaling. The protein is AP-2 complex subunit mu (AP2M1) of Bos taurus (Bovine).